The primary structure comprises 274 residues: Glutamate racemase (274 aa).

Substrate-binding positions include 10-11 and 42-43; these read DS and YG. Residue C73 is the Proton donor/acceptor of the active site. Substrate is bound at residue 74 to 75; the sequence is NT. The active-site Proton donor/acceptor is C184. 185-186 contacts substrate; the sequence is TH.

It belongs to the aspartate/glutamate racemases family.

It carries out the reaction L-glutamate = D-glutamate. It functions in the pathway cell wall biogenesis; peptidoglycan biosynthesis. Functionally, provides the (R)-glutamate required for cell wall biosynthesis. The polypeptide is Glutamate racemase (Latilactobacillus sakei subsp. sakei (strain 23K) (Lactobacillus sakei subsp. sakei)).